An 89-amino-acid polypeptide reads, in one-letter code: Aminoacyl carrier protein 2 (89 aa).

One can recognise a Carrier domain in the interval isoleucine 6–leucine 84. Residue serine 42 is modified to O-(pantetheine 4'-phosphoryl)serine.

In terms of processing, 4'-phosphopantetheine is transferred from CoA to a specific serine of the apo-form of this carrier protein.

Functionally, aminoacyl carrier protein. Can be charged with L-glycine via the formation of a thioester bond between the amino acid and the 4'-phosphopantetheinyl prosthetic group, catalyzed by the bll6282 ligase. This chain is Aminoacyl carrier protein 2, found in Bradyrhizobium diazoefficiens (strain JCM 10833 / BCRC 13528 / IAM 13628 / NBRC 14792 / USDA 110).